A 75-amino-acid polypeptide reads, in one-letter code: Caerin-1.1 (75 aa).

An N-terminal signal peptide occupies residues 1–22 (MASLKKSLFLVLLLGFVSVSIC). A propeptide spanning residues 23 to 49 (EEEKRQEDEDEHEEEGESQEEGSEEKR) is cleaved from the precursor. The segment at 24 to 49 (EEKRQEDEDEHEEEGESQEEGSEEKR) is disordered. Residues 30–45 (DEDEHEEEGESQEEGS) are compositionally biased toward acidic residues. Leu74 is subject to Leucine amide.

Belongs to the frog skin active peptide (FSAP) family. Caerin subfamily. Post-translationally, the major product is Caerin-1.1; in addition, different peptides are produced that are missing some amino acid residues at the N-terminus or C-terminus. Caerin-1.1.1 and Caerin-1.1.4 are inactive. As to expression, expressed by the skin parotoid and/or rostral glands.

The protein localises to the secreted. Its function is as follows. Antimicrobial peptide with antibacterial and antiviral activities. Adopts an alpha helical conformation which can disrupt bacterial membranes. Inhibits the formation of NO by neuronal nitric oxide synthase (nNOS) at micromolar concentrations. Acts by a non-competitive mechanism, probably by binding to calcium/calmodulin and as a consequence blocking calmodulin attachment to nNOS. In terms of biological role, is inactive. The chain is Caerin-1.1 from Ranoidea caerulea (Green tree frog).